A 99-amino-acid chain; its full sequence is MVELQEKNGSVCIAVRAQPRSSKSMVSGEWNGALKVHLQSPPVDDAANEECCRLLARLFQVPPSRVHLVAGHSSRNKRVMVEGVSAAMATELLQPFLHT.

Belongs to the UPF0235 family.

The protein is UPF0235 protein Cag_0319 of Chlorobium chlorochromatii (strain CaD3).